The primary structure comprises 99 residues: Nucleoid-associated protein UPA3_0088 (99 aa).

Belongs to the YbaB/EbfC family. As to quaternary structure, homodimer.

It localises to the cytoplasm. The protein resides in the nucleoid. Functionally, binds to DNA and alters its conformation. May be involved in regulation of gene expression, nucleoid organization and DNA protection. The protein is Nucleoid-associated protein UPA3_0088 of Ureaplasma parvum serovar 3 (strain ATCC 27815 / 27 / NCTC 11736).